The sequence spans 119 residues: uncharacterized protein (119 aa).

The stretch at 1–29 (MKKVGEEEIKQEENEKEKIVKKLNESDVK) forms a coiled coil.

This is an uncharacterized protein from Acidianus sp. F28 (AFV-2).